The following is a 384-amino-acid chain: tRNA-specific 2-thiouridylase MnmA (384 aa).

Residues 29-36 (AMSGGVDS) and Leu55 each bind ATP. Cys123 serves as the catalytic Nucleophile. A disulfide bridge connects residues Cys123 and Cys220. Gly147 is an ATP binding site. The interval 169–171 (RDQ) is interaction with tRNA. The active-site Cysteine persulfide intermediate is Cys220.

It belongs to the MnmA/TRMU family.

The protein localises to the cytoplasm. The catalysed reaction is S-sulfanyl-L-cysteinyl-[protein] + uridine(34) in tRNA + AH2 + ATP = 2-thiouridine(34) in tRNA + L-cysteinyl-[protein] + A + AMP + diphosphate + H(+). In terms of biological role, catalyzes the 2-thiolation of uridine at the wobble position (U34) of tRNA, leading to the formation of s(2)U34. This chain is tRNA-specific 2-thiouridylase MnmA, found in Dinoroseobacter shibae (strain DSM 16493 / NCIMB 14021 / DFL 12).